The chain runs to 256 residues: Undecaprenyl-diphosphatase (256 aa).

7 consecutive transmembrane segments (helical) span residues 1–21 (MDIF…FLPV), 41–61 (FHKT…LALF), 69–89 (VDIW…GFLL), 96–116 (LFAP…FLVL), 172–192 (VAAE…TGYD), 207–227 (ALGV…KGFL), and 233–253 (FNFV…LFYL).

This sequence belongs to the UppP family.

It localises to the cell inner membrane. The enzyme catalyses di-trans,octa-cis-undecaprenyl diphosphate + H2O = di-trans,octa-cis-undecaprenyl phosphate + phosphate + H(+). Its function is as follows. Catalyzes the dephosphorylation of undecaprenyl diphosphate (UPP). Confers resistance to bacitracin. The protein is Undecaprenyl-diphosphatase of Wolinella succinogenes (strain ATCC 29543 / DSM 1740 / CCUG 13145 / JCM 31913 / LMG 7466 / NCTC 11488 / FDC 602W) (Vibrio succinogenes).